A 130-amino-acid polypeptide reads, in one-letter code: Small ribosomal subunit protein uS8 (130 aa).

It belongs to the universal ribosomal protein uS8 family. In terms of assembly, part of the 30S ribosomal subunit. Contacts proteins S5 and S12.

One of the primary rRNA binding proteins, it binds directly to 16S rRNA central domain where it helps coordinate assembly of the platform of the 30S subunit. The chain is Small ribosomal subunit protein uS8 from Pseudomonas syringae pv. tomato (strain ATCC BAA-871 / DC3000).